We begin with the raw amino-acid sequence, 311 residues long: Ribosomal protein L11 methyltransferase (311 aa).

Thr162, Gly183, Asp205, and Asn248 together coordinate S-adenosyl-L-methionine.

This sequence belongs to the methyltransferase superfamily. PrmA family.

It is found in the cytoplasm. It carries out the reaction L-lysyl-[protein] + 3 S-adenosyl-L-methionine = N(6),N(6),N(6)-trimethyl-L-lysyl-[protein] + 3 S-adenosyl-L-homocysteine + 3 H(+). In terms of biological role, methylates ribosomal protein L11. This is Ribosomal protein L11 methyltransferase from Bacillus velezensis (strain DSM 23117 / BGSC 10A6 / LMG 26770 / FZB42) (Bacillus amyloliquefaciens subsp. plantarum).